Here is a 342-residue protein sequence, read N- to C-terminus: Dihydroorotate dehydrogenase (quinone) (342 aa).

FMN-binding positions include 65–69 (AGLDK) and Thr89. Position 69 (Lys69) interacts with substrate. 114–118 (NRMGF) contributes to the substrate binding site. Asn142 and Asn175 together coordinate FMN. Substrate is bound at residue Asn175. Ser178 functions as the Nucleophile in the catalytic mechanism. Asn180 contacts substrate. FMN-binding residues include Lys220 and Thr248. Position 249–250 (249–250 (NT)) interacts with substrate. FMN contacts are provided by residues Gly271, Gly300, and 321-322 (YT).

The protein belongs to the dihydroorotate dehydrogenase family. Type 2 subfamily. In terms of assembly, monomer. It depends on FMN as a cofactor.

The protein localises to the cell membrane. It catalyses the reaction (S)-dihydroorotate + a quinone = orotate + a quinol. It functions in the pathway pyrimidine metabolism; UMP biosynthesis via de novo pathway; orotate from (S)-dihydroorotate (quinone route): step 1/1. In terms of biological role, catalyzes the conversion of dihydroorotate to orotate with quinone as electron acceptor. This is Dihydroorotate dehydrogenase (quinone) from Burkholderia pseudomallei (strain K96243).